We begin with the raw amino-acid sequence, 114 residues long: ATP-dependent Clp protease adapter protein ClpS (114 aa).

The protein belongs to the ClpS family. Binds to the N-terminal domain of the chaperone ClpA.

Involved in the modulation of the specificity of the ClpAP-mediated ATP-dependent protein degradation. The chain is ATP-dependent Clp protease adapter protein ClpS from Bdellovibrio bacteriovorus (strain ATCC 15356 / DSM 50701 / NCIMB 9529 / HD100).